Consider the following 546-residue polypeptide: (-)-5-epieremophilene synthase STPS1 (546 aa).

5 residues coordinate Mg(2+): Asp-299, Asp-303, Asp-442, Thr-446, and Glu-450. A DDXXD motif motif is present at residues 299 to 303; that stretch reads DDTYD.

Belongs to the terpene synthase family. Tpsa subfamily. Monomer. The cofactor is Mg(2+). Highly expressed in leaves and at lower levels in flowers.

It carries out the reaction (2E,6E)-farnesyl diphosphate = (-)-5-epi-eremophilene + diphosphate. The protein operates within secondary metabolite biosynthesis; terpenoid biosynthesis. Functionally, sesquiterpene synthase that catalyzes the conversion of farnesyl diphosphate to (-)-5-epi-eremophilene. The sequence is that of (-)-5-epieremophilene synthase STPS1 from Salvia miltiorrhiza (Chinese sage).